A 294-amino-acid polypeptide reads, in one-letter code: 33 kDa chaperonin (294 aa).

2 disulfides stabilise this stretch: Cys-239–Cys-241 and Cys-272–Cys-275.

Belongs to the HSP33 family. Under oxidizing conditions two disulfide bonds are formed involving the reactive cysteines. Under reducing conditions zinc is bound to the reactive cysteines and the protein is inactive.

The protein localises to the cytoplasm. In terms of biological role, redox regulated molecular chaperone. Protects both thermally unfolding and oxidatively damaged proteins from irreversible aggregation. Plays an important role in the bacterial defense system toward oxidative stress. The protein is 33 kDa chaperonin of Listeria welshimeri serovar 6b (strain ATCC 35897 / DSM 20650 / CCUG 15529 / CIP 8149 / NCTC 11857 / SLCC 5334 / V8).